Reading from the N-terminus, the 444-residue chain is 4-O-dimethylallyl-L-tyrosine synthase (444 aa).

Belongs to the tryptophan dimethylallyltransferase family. Homodimer.

It catalyses the reaction L-tyrosine + dimethylallyl diphosphate = 4-O-dimethylallyl-L-tyrosine + diphosphate. 4-O-dimethylallyl-L-tyrosine synthase; part of the gene cluster that mediates the biosynthesis of an unusual class of epipolythiodioxopiperazines (ETPs) lacking the reactive thiol group important for toxicity. Firstly, L-tyrosine is prenylated by tcpD, before undergoing condensation with L-glycine in a reaction catalyzed by the NRPS tcpP leading to the diketopiperazine (DKP) backbone. Afterwards the alpha-carbon of tyrosine is oxidized by the cytochrome P450 tcpC to form a hydroxyl group. However, in contrast other ETP biosynthesis pathways studied so far, tcpC is not able to bishydroxylate the DKP at both alpha-carbon positions, but hydroxylates the alpha-carbon of the tyrosine part and the nitrogen of the glycine part. The next steps involve an alpha,beta-elimination reaction catalyzed by tcpI, a methylation by the methyltransferase tcpN the action of the four enzyme cascade tcpG/K/J/I. Due to a dysfunctional cytochrome P450 monooxygenase tcpC, the pathway leads to the biosynthesis of probable non-toxic metabolites lacking the reactive thiol group. This is 4-O-dimethylallyl-L-tyrosine synthase from Claviceps purpurea (strain 20.1) (Ergot fungus).